We begin with the raw amino-acid sequence, 576 residues long: CTP synthase (576 aa).

Residues 305–559 (QIALVGKYTH…LGLVAAAANI (255 aa)) enclose the Glutamine amidotransferase type-1 domain. Residues Cys-404, His-535, and Glu-537 each act as for GATase activity in the active site.

The protein belongs to the CTP synthase family.

It catalyses the reaction UTP + L-glutamine + ATP + H2O = CTP + L-glutamate + ADP + phosphate + 2 H(+). It functions in the pathway pyrimidine metabolism; CTP biosynthesis via de novo pathway; CTP from UDP: step 2/2. Functionally, catalyzes the ATP-dependent amination of UTP to CTP with either L-glutamine or ammonia as the source of nitrogen. This is CTP synthase (URA7) from Eremothecium gossypii (strain ATCC 10895 / CBS 109.51 / FGSC 9923 / NRRL Y-1056) (Yeast).